The primary structure comprises 292 residues: Universal stress protein Mb2346c (292 aa).

It belongs to the universal stress protein A family.

In Mycobacterium bovis (strain ATCC BAA-935 / AF2122/97), this protein is Universal stress protein Mb2346c.